Consider the following 490-residue polypeptide: Serine hydroxymethyltransferase, mitochondrial (490 aa).

The N-terminal 20 residues, 1 to 20 (MFPRASALAKCMATVHRRGL), are a transit peptide targeting the mitochondrion. Lys265 carries the post-translational modification N6-(pyridoxal phosphate)lysine.

The protein belongs to the SHMT family. Homotetramer. Interacts with NAP1. Requires pyridoxal 5'-phosphate as cofactor.

It localises to the mitochondrion. The catalysed reaction is (6R)-5,10-methylene-5,6,7,8-tetrahydrofolate + glycine + H2O = (6S)-5,6,7,8-tetrahydrofolate + L-serine. It functions in the pathway one-carbon metabolism; tetrahydrofolate interconversion. Interconversion of serine and glycine. This is Serine hydroxymethyltransferase, mitochondrial (SHM1) from Saccharomyces cerevisiae (strain ATCC 204508 / S288c) (Baker's yeast).